Consider the following 34-residue polypeptide: Photosystem II reaction center protein Psb30 (34 aa).

A helical transmembrane segment spans residues 7–27 (VAQLISLFLILTSGPAIIVLI).

It belongs to the Psb30/Ycf12 family. In terms of assembly, PSII is composed of 1 copy each of membrane proteins PsbA, PsbB, PsbC, PsbD, PsbE, PsbF, PsbH, PsbI, PsbJ, PsbK, PsbL, PsbM, PsbT, PsbX, PsbY, PsbZ, Psb30/Ycf12, peripheral proteins of the oxygen-evolving complex and a large number of cofactors. It forms dimeric complexes.

The protein localises to the plastid. It localises to the chloroplast thylakoid membrane. A core subunit of photosystem II (PSII), probably helps stabilize the reaction center. This chain is Photosystem II reaction center protein Psb30, found in Rhodomonas salina (Cryptomonas salina).